The following is a 1142-amino-acid chain: Coiled-coil domain-containing protein 40 (1142 aa).

Disordered regions lie at residues methionine 1–proline 197 and proline 251–glutamate 274. Composition is skewed to basic and acidic residues over residues serine 11–asparagine 27 and proline 35–glutamate 55. Over residues alanine 63–tyrosine 96 the composition is skewed to acidic residues. Phosphoserine is present on serine 252. Residues glutamate 265–glutamate 274 show a composition bias toward acidic residues. Coiled-coil stretches lie at residues alanine 293–glutamine 319, histidine 349–aspartate 470, glutamine 526–lysine 627, threonine 684–leucine 950, and valine 1005–leucine 1054.

It belongs to the CCDC40 family.

Its subcellular location is the cytoplasm. It localises to the cell projection. The protein resides in the cilium. Functionally, required for assembly of dynein regulatory complex (DRC) and inner dynein arm (IDA) complexes, which are responsible for ciliary beat regulation, thereby playing a central role in motility in cilia and flagella. Probably acts together with CCDC39 to form a molecular ruler that determines the 96 nanometer (nm) repeat length and arrangements of components in cilia and flagella. Not required for outer dynein arm complexes assembly. Required for axonemal recruitment of CCDC39. This chain is Coiled-coil domain-containing protein 40, found in Homo sapiens (Human).